Reading from the N-terminus, the 283-residue chain is Pantothenate synthetase (283 aa).

30 to 37 contributes to the ATP binding site; it reads MGNLHDGH. The Proton donor role is filled by H37. A (R)-pantoate-binding site is contributed by Q61. Q61 serves as a coordination point for beta-alanine. Residue 149 to 152 coordinates ATP; it reads GEKD. Q155 lines the (R)-pantoate pocket. Residue 186-189 participates in ATP binding; that stretch reads LSSR.

Belongs to the pantothenate synthetase family. As to quaternary structure, homodimer.

The protein resides in the cytoplasm. It catalyses the reaction (R)-pantoate + beta-alanine + ATP = (R)-pantothenate + AMP + diphosphate + H(+). The protein operates within cofactor biosynthesis; (R)-pantothenate biosynthesis; (R)-pantothenate from (R)-pantoate and beta-alanine: step 1/1. In terms of biological role, catalyzes the condensation of pantoate with beta-alanine in an ATP-dependent reaction via a pantoyl-adenylate intermediate. This is Pantothenate synthetase from Escherichia coli O45:K1 (strain S88 / ExPEC).